The following is a 391-amino-acid chain: Formate-dependent phosphoribosylglycinamide formyltransferase (391 aa).

Residues 20-21 (EL) and glutamate 80 contribute to the N(1)-(5-phospho-beta-D-ribosyl)glycinamide site. Residues arginine 112, lysine 153, 158–163 (SSGKGQ), 193–196 (EGFV), and glutamate 201 each bind ATP. The ATP-grasp domain occupies 117–306 (RLAAETLGLP…EFALHVRAIL (190 aa)). Residues glutamate 265 and glutamate 277 each coordinate Mg(2+). Residues aspartate 284, lysine 354, and 361–362 (RR) contribute to the N(1)-(5-phospho-beta-D-ribosyl)glycinamide site.

This sequence belongs to the PurK/PurT family. Homodimer.

The catalysed reaction is N(1)-(5-phospho-beta-D-ribosyl)glycinamide + formate + ATP = N(2)-formyl-N(1)-(5-phospho-beta-D-ribosyl)glycinamide + ADP + phosphate + H(+). Its pathway is purine metabolism; IMP biosynthesis via de novo pathway; N(2)-formyl-N(1)-(5-phospho-D-ribosyl)glycinamide from N(1)-(5-phospho-D-ribosyl)glycinamide (formate route): step 1/1. In terms of biological role, involved in the de novo purine biosynthesis. Catalyzes the transfer of formate to 5-phospho-ribosyl-glycinamide (GAR), producing 5-phospho-ribosyl-N-formylglycinamide (FGAR). Formate is provided by PurU via hydrolysis of 10-formyl-tetrahydrofolate. This chain is Formate-dependent phosphoribosylglycinamide formyltransferase, found in Shewanella putrefaciens (strain CN-32 / ATCC BAA-453).